Here is a 349-residue protein sequence, read N- to C-terminus: tRNA pseudouridine synthase D (349 aa).

Phe27 is a binding site for substrate. The active-site Nucleophile is the Asp80. Asn129 provides a ligand contact to substrate. In terms of domain architecture, TRUD spans 155–303 (GVPNYFGAQR…VEAARRAMLL (149 aa)). Phe329 provides a ligand contact to substrate.

This sequence belongs to the pseudouridine synthase TruD family.

The enzyme catalyses uridine(13) in tRNA = pseudouridine(13) in tRNA. Functionally, responsible for synthesis of pseudouridine from uracil-13 in transfer RNAs. This Escherichia fergusonii (strain ATCC 35469 / DSM 13698 / CCUG 18766 / IAM 14443 / JCM 21226 / LMG 7866 / NBRC 102419 / NCTC 12128 / CDC 0568-73) protein is tRNA pseudouridine synthase D.